We begin with the raw amino-acid sequence, 201 residues long: Adenylyl-sulfate kinase (201 aa).

35-42 (GLSGSGKS) contacts ATP. Catalysis depends on Ser-109, which acts as the Phosphoserine intermediate.

Belongs to the APS kinase family.

The enzyme catalyses adenosine 5'-phosphosulfate + ATP = 3'-phosphoadenylyl sulfate + ADP + H(+). Its pathway is sulfur metabolism; hydrogen sulfide biosynthesis; sulfite from sulfate: step 2/3. In terms of biological role, catalyzes the synthesis of activated sulfate. This Bacteroides thetaiotaomicron (strain ATCC 29148 / DSM 2079 / JCM 5827 / CCUG 10774 / NCTC 10582 / VPI-5482 / E50) protein is Adenylyl-sulfate kinase.